The chain runs to 229 residues: Potassium/proton antiporter CemA (229 aa).

3 consecutive transmembrane segments (helical) span residues 7 to 27 (FTPL…SLSF), 114 to 134 (IISF…LVIL), and 190 to 210 (ISGL…YWIF).

Belongs to the CemA family.

It is found in the plastid. The protein resides in the chloroplast inner membrane. It carries out the reaction K(+)(in) + H(+)(out) = K(+)(out) + H(+)(in). Its function is as follows. Contributes to K(+)/H(+) antiport activity by supporting proton efflux to control proton extrusion and homeostasis in chloroplasts in a light-dependent manner to modulate photosynthesis. Prevents excessive induction of non-photochemical quenching (NPQ) under continuous-light conditions. Indirectly promotes efficient inorganic carbon uptake into chloroplasts. The sequence is that of Potassium/proton antiporter CemA from Jasminum nudiflorum (Winter jasmine).